The primary structure comprises 455 residues: Homogentisate 1,2-dioxygenase (455 aa).

Histidine 308 acts as the Proton acceptor in catalysis. Positions 351 and 357 each coordinate Fe cation. Residues tyrosine 366 and histidine 387 each contribute to the homogentisate site. Fe cation is bound at residue histidine 387.

This sequence belongs to the homogentisate dioxygenase family. Hexamer; dimer of trimers. Requires Fe cation as cofactor.

It carries out the reaction homogentisate + O2 = 4-maleylacetoacetate + H(+). Its pathway is amino-acid degradation; L-phenylalanine degradation; acetoacetate and fumarate from L-phenylalanine: step 4/6. In terms of biological role, involved in the catabolism of homogentisate (2,5-dihydroxyphenylacetate or 2,5-OH-PhAc), a central intermediate in the degradation of phenylalanine and tyrosine. Catalyzes the oxidative ring cleavage of the aromatic ring of homogentisate to yield maleylacetoacetate. This chain is Homogentisate 1,2-dioxygenase, found in Xanthomonas campestris pv. campestris (strain 8004).